The primary structure comprises 130 residues: Small ribosomal subunit protein uS9 (130 aa).

The protein belongs to the universal ribosomal protein uS9 family.

This is Small ribosomal subunit protein uS9 from Streptococcus equi subsp. zooepidemicus (strain H70).